The sequence spans 294 residues: MKTKIIVIVGPTAVGKTALAIEVAKRFNGEVVSGDSQQVYRGLDIGTAKASPEEQAAVPHHLIDVREITESYSAFDFVSEAKMTIEGIHNRGKLAIIAGGTGLYIQSLLEGYHLGGETPHEEILAYRASLEPYSDEELAHLVDQAGLEIPQFNRRRAMRALEIAHFGQDLENQETLYEPLIICLDDERSQLYERINHRVDLMFEAGLLDEAKWLFDHSPNVQAAKGIGYKELFPYFRGEQTLEEASESLKQATRRFAKRQLTWFRNRMQVTFYQIGESGVQDRILSQIEEFLDD.

10–17 lines the ATP pocket; it reads GPTAVGKT. 12–17 serves as a coordination point for substrate; the sequence is TAVGKT. Residues 35–38 are interaction with substrate tRNA; that stretch reads DSQQ.

It belongs to the IPP transferase family. As to quaternary structure, monomer. Requires Mg(2+) as cofactor.

The catalysed reaction is adenosine(37) in tRNA + dimethylallyl diphosphate = N(6)-dimethylallyladenosine(37) in tRNA + diphosphate. Catalyzes the transfer of a dimethylallyl group onto the adenine at position 37 in tRNAs that read codons beginning with uridine, leading to the formation of N6-(dimethylallyl)adenosine (i(6)A). The polypeptide is tRNA dimethylallyltransferase (Streptococcus pneumoniae serotype 4 (strain ATCC BAA-334 / TIGR4)).